A 361-amino-acid chain; its full sequence is DNA double-strand break repair protein Mre11 (361 aa).

Mn(2+) contacts are provided by Asp7, His9, Asp48, and Asn83. The active-site Proton donor is the His84. Residues His176, His204, and His206 each coordinate Mn(2+).

The protein belongs to the MRE11/RAD32 family. Homodimer. Forms a heterotetramer composed of two Mre11 subunits and two Rad50 subunits. Mn(2+) is required as a cofactor.

Its activity is regulated as follows. Nuclease activity is regulated by Rad50. Part of the Rad50/Mre11 complex, which is involved in the early steps of DNA double-strand break (DSB) repair. The complex may facilitate opening of the processed DNA ends to aid in the recruitment of HerA and NurA. Mre11 binds to DSB ends and has both double-stranded 3'-5' exonuclease activity and single-stranded endonuclease activity. This is DNA double-strand break repair protein Mre11 from Nanoarchaeum equitans (strain Kin4-M).